Reading from the N-terminus, the 257-residue chain is Snake venom serine protease 3 (257 aa).

A signal peptide spans 1–18 (MVLIRVLANLLILQLSYA). Residues 19 to 24 (QKSSEL) constitute a propeptide that is removed on maturation. In terms of domain architecture, Peptidase S1 spans 25–248 (VIGGDECNIN…YTDWIQNIIA (224 aa)). 6 cysteine pairs are disulfide-bonded: Cys31–Cys163, Cys50–Cys66, Cys98–Cys255, Cys142–Cys209, Cys174–Cys188, and Cys199–Cys224. A glycan (N-linked (GlcNAc...) asparagine) is linked at Asn44. His65 functions as the Charge relay system in the catalytic mechanism. N-linked (GlcNAc...) asparagine glycosylation is present at Asn103. The active-site Charge relay system is Asp110. Residues Asn117 and Asn154 are each glycosylated (N-linked (GlcNAc...) asparagine). Ser203 (charge relay system) is an active-site residue. Asn250 is a glycosylation site (N-linked (GlcNAc...) asparagine).

This sequence belongs to the peptidase S1 family. Snake venom subfamily. As to quaternary structure, monomer. As to expression, expressed by the venom gland.

Its subcellular location is the secreted. Functionally, snake venom serine protease that may act in the hemostasis system of the prey. In Protobothrops flavoviridis (Habu), this protein is Snake venom serine protease 3 (TLF3).